A 189-amino-acid polypeptide reads, in one-letter code: Interferon alpha-8 (189 aa).

The first 23 residues, 1–23, serve as a signal peptide directing secretion; the sequence is MALTFYLLVALVVLSYKSFSSLG. Cystine bridges form between cysteine 24–cysteine 122 and cysteine 52–cysteine 162.

This sequence belongs to the alpha/beta interferon family.

It localises to the secreted. In terms of biological role, produced by macrophages, IFN-alpha have antiviral activities. Interferon stimulates the production of two enzymes: a protein kinase and an oligoadenylate synthetase. This Homo sapiens (Human) protein is Interferon alpha-8 (IFNA8).